The following is a 193-amino-acid chain: Putative 3-methyladenine DNA glycosylase (193 aa).

The protein belongs to the DNA glycosylase MPG family.

The chain is Putative 3-methyladenine DNA glycosylase from Francisella tularensis subsp. holarctica (strain FTNF002-00 / FTA).